The sequence spans 358 residues: UDP-N-acetylglucosamine--N-acetylmuramyl-(pentapeptide) pyrophosphoryl-undecaprenol N-acetylglucosamine transferase (358 aa).

UDP-N-acetyl-alpha-D-glucosamine is bound by residues 11-13, Arg-163, Ser-191, Ile-245, and Gln-290; that span reads TGG.

Belongs to the glycosyltransferase 28 family. MurG subfamily.

The protein localises to the cell inner membrane. It catalyses the reaction di-trans,octa-cis-undecaprenyl diphospho-N-acetyl-alpha-D-muramoyl-L-alanyl-D-glutamyl-meso-2,6-diaminopimeloyl-D-alanyl-D-alanine + UDP-N-acetyl-alpha-D-glucosamine = di-trans,octa-cis-undecaprenyl diphospho-[N-acetyl-alpha-D-glucosaminyl-(1-&gt;4)]-N-acetyl-alpha-D-muramoyl-L-alanyl-D-glutamyl-meso-2,6-diaminopimeloyl-D-alanyl-D-alanine + UDP + H(+). It functions in the pathway cell wall biogenesis; peptidoglycan biosynthesis. In terms of biological role, cell wall formation. Catalyzes the transfer of a GlcNAc subunit on undecaprenyl-pyrophosphoryl-MurNAc-pentapeptide (lipid intermediate I) to form undecaprenyl-pyrophosphoryl-MurNAc-(pentapeptide)GlcNAc (lipid intermediate II). The sequence is that of UDP-N-acetylglucosamine--N-acetylmuramyl-(pentapeptide) pyrophosphoryl-undecaprenol N-acetylglucosamine transferase from Herminiimonas arsenicoxydans.